A 110-amino-acid chain; its full sequence is UPF0339 protein SO_3888 (110 aa).

2 consecutive repeat copies span residues 10-58 (SSND…RYAK) and 61-109 (AKND…IKDL).

This sequence belongs to the UPF0339 family. Duplicated subfamily.

This chain is UPF0339 protein SO_3888, found in Shewanella oneidensis (strain ATCC 700550 / JCM 31522 / CIP 106686 / LMG 19005 / NCIMB 14063 / MR-1).